The sequence spans 213 residues: Large ribosomal subunit protein uL3 (213 aa).

Belongs to the universal ribosomal protein uL3 family. In terms of assembly, part of the 50S ribosomal subunit. Forms a cluster with proteins L14 and L19.

Its function is as follows. One of the primary rRNA binding proteins, it binds directly near the 3'-end of the 23S rRNA, where it nucleates assembly of the 50S subunit. The chain is Large ribosomal subunit protein uL3 from Bifidobacterium longum subsp. infantis (strain ATCC 15697 / DSM 20088 / JCM 1222 / NCTC 11817 / S12).